A 4456-amino-acid polypeptide reads, in one-letter code: Dynein axonemal heavy chain 2 (4456 aa).

A compositionally biased stretch (basic residues) spans 1–12 (MASKAEKKRKVA). A disordered region spans residues 1-55 (MASKAEKKRKVAGRGGARAGRVVRAPQSTAGPGATEASLLPDGQEPEPESGKEDS). Residues 1–1795 (MASKAEKKRK…RQTNTQFQYG (1795 aa)) form a stem region. A coiled-coil region spans residues 1218-1274 (LDQIAQMRAMLMAMRDEENNLRSNLGIFKIEQPVSKDLQILEKELDALQQVWEITRD). A TPR 1 repeat occupies 1439 to 1474 (EDNQVALSTMKASRFVKAFEKDVDHWERCLSLILEV). AAA regions lie at residues 1794-2015 (YGYE…LLRY), 2075-2302 (DTIE…DNCN), 2407-2654 (RYPP…VFQG), and 2751-3003 (EYNL…LRRY). ATP-binding positions include 1832–1839 (GPAGTGKT), 2113–2120 (GGTGSSKT), and 2445–2452 (GPVGTGKT). Residues 2750–2783 (NEYNLSPSVVPMQLVLFREAIEHITRIVRVIGQP) form a TPR 2 repeat. ATP is bound at residue 2791-2798 (GIGGSGRQ). The stalk stretch occupies residues 3018–3301 (YKKLLGEKRQ…EELRKKSEEM (284 aa)). Positions 3041–3078 (FKIDETREKVEVMSLELEDAKKKVAEFQKQCEEYLVII) form a coiled coil. Residues 3101 to 3134 (IEEVKCQALADNAQKDLEEALPALEEAMRALESL) form a TPR 3 repeat. Coiled-coil stretches lie at residues 3245–3333 (KRIR…EEDL) and 3552–3596 (VRKE…GSLL). 2 AAA regions span residues 3387–3617 (LTNP…EVTE) and 3833–4052 (VTSF…LLSL). 2 TPR repeats span residues 4101 to 4134 (TTPF…LPSM) and 4135 to 4169 (DPPE…QPQI).

The protein belongs to the dynein heavy chain family. As to quaternary structure, part of the axonemal inner dynein arm complex that consists of at least two heavy chains and a number of intermediate and light chains. Interacts with DNAI4.

The protein resides in the cytoplasm. Its subcellular location is the cytoskeleton. The protein localises to the cilium axoneme. It localises to the flagellum axoneme. Functionally, as part of the axonemal inner dynein arm complex plays a central role in ciliary beat. Expressed in sperm flagellum, it is required for sperm motility. Dyneins are microtubule-based molecular motors possessing ATPase activities that can convert the chemical energy of ATP into relative sliding between adjacent microtubule doublets to generate ciliary bending. This chain is Dynein axonemal heavy chain 2, found in Mus musculus (Mouse).